Reading from the N-terminus, the 1076-residue chain is Nickel and cobalt resistance protein CnrA (1076 aa).

Transmembrane regions (helical) follow at residues 14-34 (WLVLFLTAVVAVIGAWQLNLL), 366-386 (TVAKNLIEGALLVVAILFALL), 390-410 (RAATIAALVIPLSLLVSAIGM), 418-438 (NLMSLGALDFGLIIDGAVIIV), 475-495 (PTVYGQLVIFMVFLPCLTFQG), 502-522 (SPMVITLMLALASAFVLSLTF), 561-581 (PMPFIGAGIATVAVATVAFTF), 903-923 (RLAIIVPLCFILIAATLYMAI), 928-948 (LTATVLTAVPLALAGGVFALL), 959-979 (AVGFIAVSGVAVLNGLVLISA), 1003-1023 (RPVLMTALVASLGFVPMAIAT), and 1035-1055 (TVVIGGLVTATVLTLFVLPAL).

It belongs to the resistance-nodulation-cell division (RND) (TC 2.A.6) family.

It localises to the cell inner membrane. Functionally, the products of the genes cnrA, cnrB, and cnrC are likely to form a membrane-bound protein complex catalyzing an energy-dependent efflux of Ni(2+) and Co(2+). The mechanism of action of the CnrCBA complex may be that of a proton/cation antiporter. This Cupriavidus metallidurans (strain ATCC 43123 / DSM 2839 / NBRC 102507 / CH34) (Ralstonia metallidurans) protein is Nickel and cobalt resistance protein CnrA (cnrA).